A 368-amino-acid polypeptide reads, in one-letter code: Serine/threonine-protein phosphatase PP2A-like PPG1 (368 aa).

The Mn(2+) site is built by Asp50, His52, Asp78, and Asn110. The active-site Proton donor is His111. Positions 161 and 247 each coordinate Mn(2+).

Belongs to the PPP phosphatase family. PP-2A subfamily. Inactivated in a complex with phosphatase methylesterase PPE1 (PP2Ai). Interacts with phosphatase 2A activator RRD1, which can reactivate PP2Ai by dissociating the catalytic subunit from the complex. Interacts with TAP42. Mn(2+) is required as a cofactor. Post-translationally, reversibly methyl esterified on Leu-368 by leucine carboxyl methyltransferase 1 (PPM1) and protein phosphatase methylesterase 1 (PPE1). Carboxyl methylation influences the affinity of the catalytic subunit for the different regulatory subunits, thereby modulating the PP2A holoenzyme's substrate specificity, enzyme activity and cellular localization.

It carries out the reaction O-phospho-L-seryl-[protein] + H2O = L-seryl-[protein] + phosphate. The catalysed reaction is O-phospho-L-threonyl-[protein] + H2O = L-threonyl-[protein] + phosphate. Its function is as follows. Involved in glycogen accumulation. In Saccharomyces cerevisiae (strain ATCC 204508 / S288c) (Baker's yeast), this protein is Serine/threonine-protein phosphatase PP2A-like PPG1 (PPG1).